The primary structure comprises 116 residues: Iron-sulfur cluster insertion protein ErpA (116 aa).

Iron-sulfur cluster is bound by residues Cys44, Cys108, and Cys110.

This sequence belongs to the HesB/IscA family. Homodimer. It depends on iron-sulfur cluster as a cofactor.

In terms of biological role, required for insertion of 4Fe-4S clusters for at least IspG. This chain is Iron-sulfur cluster insertion protein ErpA, found in Ectopseudomonas mendocina (strain ymp) (Pseudomonas mendocina).